Here is a 963-residue protein sequence, read N- to C-terminus: Low-density lipoprotein receptor-related protein 8 (963 aa).

Residues 1-32 (MGLPEPGPLRLLALLLLLLLLLLLQLQHLAAA) form the signal peptide. Over 42-826 (GPAKDCEKDQ…SKMGSTVTAA (785 aa)) the chain is Extracellular. 7 consecutive LDL-receptor class A domains span residues 46–82 (DCEKDQFQCRNERCIPSVWRCDEDDDCLDHSDEDDCP), 85–123 (TCADSDFTCDNGHCIHERWKCDGEEECPDGSDESEATCT), 126–164 (VCPAEKLSCGPTSHKCVPASWRCDGEKDCEGGADEAGCA), 166–202 (LCAPHEFQCGNRSCLAAVFVCDGDDDCGDGSDERGCA), 205–246 (ACGP…ELCG), 258–295 (ACATASQFACRSGECVHLGWRCDGDRDCKDKSDEADCP), and 298–334 (TCRGDEFQCGDGTCVLAIKHCNQEQDCPDGSDEAGCL). Disulfide bonds link Cys-47–Cys-59, Cys-54–Cys-72, Cys-66–Cys-81, Cys-86–Cys-98, Cys-93–Cys-111, Cys-105–Cys-122, Cys-127–Cys-141, Cys-134–Cys-154, Cys-148–Cys-163, Cys-167–Cys-179, Cys-174–Cys-192, Cys-186–Cys-201, Cys-206–Cys-221, Cys-213–Cys-234, Cys-228–Cys-245, Cys-259–Cys-272, Cys-267–Cys-285, Cys-279–Cys-294, Cys-299–Cys-311, Cys-306–Cys-324, Cys-318–Cys-333, Cys-340–Cys-351, Cys-347–Cys-360, Cys-362–Cys-374, Cys-380–Cys-390, Cys-386–Cys-399, and Cys-401–Cys-414. Ca(2+) contacts are provided by Trp-64, Asp-67, Asp-69, Asp-71, Asp-77, and Glu-78. N-linked (GlcNAc...) asparagine glycosylation occurs at Asn-176. Positions 336 to 375 (GLNECLHNNGGCSHICTDLKIGFECTCPAGFQLLDQKTCG) constitute an EGF-like 1 domain. The EGF-like 2; calcium-binding domain occupies 376-415 (DIDECKDPDACSQICVNYKGYFKCECYPGYEMDLLTKNCK). Asn-441 is a glycosylation site (N-linked (GlcNAc...) asparagine). LDL-receptor class B repeat units lie at residues 462–508 (NRIY…DWVH), 509–551 (KHIY…DPLR), 552–595 (GFMY…DLLS), 596–639 (QRLY…VFED), and 640–681 (KVFW…FHEL). Asn-518 and Asn-538 each carry an N-linked (GlcNAc...) asparagine glycan. The tract at residues 740–798 (STSTTTLASTMTRTVPATTRAPGTTVHRSTYQNHSTETPSLTAAVPSSVSVPRAPSISP) is clustered O-linked oligosaccharides. A disordered region spans residues 754–815 (VPATTRAPGT…SNHSQHYANE (62 aa)). The segment covering 765 to 777 (VHRSTYQNHSTET) has biased composition (polar residues). Asn-772 carries an N-linked (GlcNAc...) asparagine glycan. A compositionally biased stretch (low complexity) spans 778 to 799 (PSLTAAVPSSVSVPRAPSISPS). A compositionally biased stretch (polar residues) spans 800–812 (TLSPATSNHSQHY). An N-linked (GlcNAc...) asparagine glycan is attached at Asn-807. The chain crosses the membrane as a helical span at residues 827 to 847 (VIGIIVPIVVIALLCMSGYLI). Residues 848-963 (WRNWKRKNTK…ALSLEDDGLP (116 aa)) lie on the Cytoplasmic side of the membrane.

This sequence belongs to the LDLR family. Homooligomer. Interacts with VLDLR. Reelin associates with two or more receptor molecules. Interacts with DAB1 and JNK-interacting proteins. Interacts with SNX17. Interacts with PCSK9. Interacts with MDK; this interaction is calcium dependent. Interacts with CLU. In terms of assembly, (Microbial infection) Interacts with Semliki Forest virus E2-E1 heterodimer; this interaction mediates viral entry to host cell. As to quaternary structure, (Microbial infection) Interacts (via class A repeats) with Eastern equine encephalitis virus spike glycoprotein E2; this interaction mediates viral entry into host cell. In terms of processing, O-glycosylated. Some alternatively spliced isoforms lack the O-linked sugar domain. Undergoes sequential, furin and gamma-secretase dependent, proteolytic processing, resulting in the extracellular release of the entire ligand-binding domain as a soluble polypeptide and in the intracellular domain (ICD) release into the cytoplasm. The gamma-secretase-dependent proteolytical processing occurs after the bulk of the extracellular domain has been shed, in a furin-dependent manner, in alternatively spliced isoforms carrying the furin cleavage site. Hypoglycosylation (mainly hypo-O-glycosylation) leads to increased extracellular cleavage, which in turn results in accelerating release of the intracellular domain (ICD) by the gamma-secretase. The resulting receptor fragment is able to inhibit Reelin signaling and in particular the Reelin-induced DAB1 phosphorylation. Post-translationally, tyrosine phosphorylated upon apoE binding. In terms of processing, ubiquitinated by MYLIP leading to degradation. In terms of tissue distribution, expressed mainly in brain and placenta. Also expressed in platelets and megakaryocytic cells. Not expressed in the liver.

It is found in the cell membrane. Its subcellular location is the secreted. Its function is as follows. Cell surface receptor for Reelin (RELN) and apolipoprotein E (apoE)-containing ligands. LRP8 participates in transmitting the extracellular Reelin signal to intracellular signaling processes, by binding to DAB1 on its cytoplasmic tail. Reelin acts via both the VLDL receptor (VLDLR) and LRP8 to regulate DAB1 tyrosine phosphorylation and microtubule function in neurons. LRP8 has higher affinity for Reelin than VLDLR. LRP8 is thus a key component of the Reelin pathway which governs neuronal layering of the forebrain during embryonic brain development. Binds the endoplasmic reticulum resident receptor-associated protein (RAP). Binds dimers of beta 2-glycoprotein I and may be involved in the suppression of platelet aggregation in the vasculature. Highly expressed in the initial segment of the epididymis, where it affects the functional expression of clusterin and phospholipid hydroperoxide glutathione peroxidase (PHGPx), two proteins required for sperm maturation. May also function as an endocytic receptor. Not required for endocytic uptake of SEPP1 in the kidney which is mediated by LRP2. Together with its ligand, apolipoprotein E (apoE), may indirectly play a role in the suppression of the innate immune response by controlling the survival of myeloid-derived suppressor cells. (Microbial infection) Acts as a receptor for Semliki Forest virus. The protein is Low-density lipoprotein receptor-related protein 8 (LRP8) of Homo sapiens (Human).